Reading from the N-terminus, the 259-residue chain is Dolichol-phosphate mannosyltransferase subunit 1 (259 aa).

Ala2 carries the post-translational modification N-acetylalanine. Ser3 is subject to Phosphoserine. GDP-alpha-D-mannose-binding residues include Pro31, Tyr33, Glu35, Ile62, Asp64, Asp117, Ala118, Asp119, Arg146, Arg233, and Lys239. Mg(2+) is bound at residue Asp119. Residue Asp119 participates in Mn(2+) binding.

This sequence belongs to the glycosyltransferase 2 family. Component of the dolichol-phosphate mannose (DPM) synthase complex composed of DPM1, DPM2 and DPM3; within the complex, directly interacts with DPM3. This interaction may stabilize DPM1. Mg(2+) serves as cofactor. It depends on Mn(2+) as a cofactor. Requires Ca(2+) as cofactor.

The protein localises to the endoplasmic reticulum. It carries out the reaction a di-trans,poly-cis-dolichyl phosphate + GDP-alpha-D-mannose = a di-trans,poly-cis-dolichyl beta-D-mannosyl phosphate + GDP. It participates in protein modification; protein glycosylation. Functionally, transfers mannose from GDP-mannose to dolichol monophosphate to form dolichol phosphate mannose (Dol-P-Man) which is the mannosyl donor in pathways leading to N-glycosylation, glycosyl phosphatidylinositol membrane anchoring, and O-mannosylation of proteins; catalytic subunit of the dolichol-phosphate mannose (DPM) synthase complex. The polypeptide is Dolichol-phosphate mannosyltransferase subunit 1 (DPM1) (Sus scrofa (Pig)).